The following is a 230-amino-acid chain: 7-cyano-7-deazaguanine synthase (230 aa).

An ATP-binding site is contributed by 9–19 (LSGGLDSATTA). The Zn(2+) site is built by C190, C198, C201, and C204.

The protein belongs to the QueC family. Zn(2+) serves as cofactor.

The catalysed reaction is 7-carboxy-7-deazaguanine + NH4(+) + ATP = 7-cyano-7-deazaguanine + ADP + phosphate + H2O + H(+). It functions in the pathway purine metabolism; 7-cyano-7-deazaguanine biosynthesis. Functionally, catalyzes the ATP-dependent conversion of 7-carboxy-7-deazaguanine (CDG) to 7-cyano-7-deazaguanine (preQ(0)). The chain is 7-cyano-7-deazaguanine synthase from Microcystis aeruginosa (strain NIES-843 / IAM M-2473).